The sequence spans 184 residues: Alpha-tubulin N-acetyltransferase (184 aa).

The 174-residue stretch at 1–174 (MDTHGEKMKN…NNFVIFAEYF (174 aa)) folds into the N-acetyltransferase domain. Acetyl-CoA is bound by residues 108-121 (FYIR…GLGL) and 144-153 (SHKLRSFLKK).

Belongs to the acetyltransferase ATAT1 family.

The enzyme catalyses L-lysyl-[alpha-tubulin] + acetyl-CoA = N(6)-acetyl-L-lysyl-[alpha-tubulin] + CoA + H(+). In terms of biological role, specifically acetylates 'Lys-40' in alpha-tubulin on the lumenal side of microtubules. Promotes microtubule destabilization and accelerates microtubule dynamics; this activity may be independent of acetylation activity. Acetylates alpha-tubulin with a slow enzymatic rate, due to a catalytic site that is not optimized for acetyl transfer. Enters the microtubule through each end and diffuses quickly throughout the lumen of microtubules. Acetylates only long/old microtubules because of its slow acetylation rate since it does not have time to act on dynamically unstable microtubules before the enzyme is released. The protein is Alpha-tubulin N-acetyltransferase of Plasmodium vivax (strain Salvador I).